The chain runs to 297 residues: Occlusion-derived virus envelope protein E27 (297 aa).

Belongs to the baculoviridae E27 family. In terms of assembly, interacts with host mus209/PCNA, cdc2 and cdk6.

The protein resides in the virion membrane. Its function is as follows. Acts as a cyclin-like protein and plays a role in the modulation of host cell cycle. May promote G2/S arrest by interacting with host mus209/PCNA, cdc2 and cdk6. The cell cycle arrest is characterized by an intact nuclear envelope, concomitant with sustained activity of host cdc2. However, viral DNA replication still occurs in the arrested cells. The chain is Occlusion-derived virus envelope protein E27 from Orgyia pseudotsugata multicapsid polyhedrosis virus (OpMNPV).